Reading from the N-terminus, the 293-residue chain is NAD-dependent protein deacetylase (293 aa).

A Deacetylase sirtuin-type domain is found at 1–284 (MTVAITQTGP…QPPDPLHTAT (284 aa)). NAD(+) contacts are provided by residues 27–47 (GAGCSTDSGIPDYRDLQGGWK) and 105–108 (QNVD). The Proton acceptor role is filled by His123. Cys131, Cys134, Cys182, and Cys185 together coordinate Zn(2+). NAD(+) is bound by residues 222–224 (GSS), 248–250 (NFG), and Cys266.

It belongs to the sirtuin family. Class II subfamily. The cofactor is Zn(2+).

The protein localises to the cytoplasm. The enzyme catalyses N(6)-acetyl-L-lysyl-[protein] + NAD(+) + H2O = 2''-O-acetyl-ADP-D-ribose + nicotinamide + L-lysyl-[protein]. Functionally, NAD-dependent protein deacetylase which modulates the activities of several enzymes which are inactive in their acetylated form. In Xanthomonas campestris pv. campestris (strain 8004), this protein is NAD-dependent protein deacetylase.